Reading from the N-terminus, the 235-residue chain is Adenosine 5'-phosphosulfate reductase (235 aa).

Residues Cys121, Cys122, Cys204, and Cys207 each contribute to the [4Fe-4S] cluster site. The active-site Nucleophile; cysteine thiosulfonate intermediate is the Cys230.

It belongs to the PAPS reductase family. CysH subfamily. [4Fe-4S] cluster serves as cofactor.

It is found in the cytoplasm. It carries out the reaction [thioredoxin]-disulfide + sulfite + AMP + 2 H(+) = adenosine 5'-phosphosulfate + [thioredoxin]-dithiol. Its pathway is sulfur metabolism; hydrogen sulfide biosynthesis; sulfite from sulfate. Functionally, catalyzes the formation of sulfite from adenosine 5'-phosphosulfate (APS) using thioredoxin as an electron donor. The protein is Adenosine 5'-phosphosulfate reductase of Geobacillus thermodenitrificans (strain NG80-2).